Reading from the N-terminus, the 551-residue chain is Protein PNS1 (551 aa).

Residues 1–72 (MSAQEFYQGG…TGGQPVYQDT (72 aa)) form a disordered region. The Cytoplasmic segment spans residues 1-94 (MSAQEFYQGG…RMNPRKRVND (94 aa)). The segment covering 8 to 19 (QGGNQRGYQQQQ) has biased composition (low complexity). Residues 45-63 (PPNYNMKPSQPYASTNPET) show a composition bias toward polar residues. The chain crosses the membrane as a helical span at residues 95–115 (IIPLILFIAAVVGFAVVSGIA). Residues 116-147 (IHGFVQVNGLGGGMGDSSIGRTGSSITLDYHT) lie on the Extracellular side of the membrane. Residues 148–168 (VYLLLVVVALGLVIASLYLAA) form a helical membrane-spanning segment. Over 169 to 177 (LRAFTKIIL) the chain is Cytoplasmic. A helical transmembrane segment spans residues 178–198 (EVTLALTVILNIGICIYYFII). Residues 199 to 200 (QY) lie on the Extracellular side of the membrane. Residues 201–221 (WSGAIIFLIIALVSVFFYWGM) form a helical membrane-spanning segment. The Cytoplasmic segment spans residues 222-244 (RKRIPLAKLLLQTTIDVTKHHPS). A helical transmembrane segment spans residues 245–265 (VYVVVFIGLIIQAAVSVWYTF). Residues 266–307 (TCIAIYVKWTPGSAACSDGGCSSSKVAGLVFYATFSYLWLSQ) lie on the Extracellular side of the membrane. A helical membrane pass occupies residues 308 to 328 (VIGNVILCTLAGGVFGGWYYY). Over 329-356 (GPRTPGGGVPKRASLLAFVRASTLSLGS) the chain is Cytoplasmic. A helical transmembrane segment spans residues 357 to 377 (IAFGSLLVTILELLRLILQLF). Topologically, residues 378–386 (RQYEAGQGD) are extracellular. Residues 387–407 (MIGSILICIAQCCIGCIQWMV) traverse the membrane as a helical segment. At 408 to 452 (EYFNKYAYIEIALYGKSYIPAAKDTWRLLKDRGIDALVNDSLVGT) the chain is on the cytoplasmic side. The chain crosses the membrane as a helical span at residues 453–473 (ALMWGAYINGFLCAVLGYFYL). The Extracellular segment spans residues 474-488 (RFTHPAYNSDGQYSA). A helical membrane pass occupies residues 489–509 (PVILFSFLIGLNESFTVGSAI). At 510 to 551 (DAGVSTIFVGLGEDPMVLAERSPGLFEMIRQVYPRVVQGVPH) the chain is on the cytoplasmic side.

It belongs to the CTL (choline transporter-like) family.

It is found in the cell membrane. Probably involved in transport through the plasma membrane. The chain is Protein PNS1 (PNS1) from Cryptococcus neoformans var. neoformans serotype D (strain B-3501A) (Filobasidiella neoformans).